Consider the following 297-residue polypeptide: Cytidine deaminase (297 aa).

CMP/dCMP-type deaminase domains follow at residues 54–174 and 192–297; these read SSVE…FGPK and LRGD…YIEV. 95-97 contributes to the substrate binding site; it reads NQE. Residue His108 coordinates Zn(2+). Glu110 functions as the Proton donor in the catalytic mechanism. Residues Cys135 and Cys138 each contribute to the Zn(2+) site.

This sequence belongs to the cytidine and deoxycytidylate deaminase family. As to quaternary structure, homodimer. Zn(2+) serves as cofactor.

The enzyme catalyses cytidine + H2O + H(+) = uridine + NH4(+). The catalysed reaction is 2'-deoxycytidine + H2O + H(+) = 2'-deoxyuridine + NH4(+). Functionally, this enzyme scavenges exogenous and endogenous cytidine and 2'-deoxycytidine for UMP synthesis. The protein is Cytidine deaminase of Actinobacillus pleuropneumoniae serotype 5b (strain L20).